The primary structure comprises 81 residues: Cytochrome b559 subunit alpha (81 aa).

A helical membrane pass occupies residues 21–35 (VIHSITIPSLFVSGW). Histidine 23 is a heme binding site.

The protein belongs to the PsbE/PsbF family. Heterodimer of an alpha subunit and a beta subunit. PSII is composed of 1 copy each of membrane proteins PsbA, PsbB, PsbC, PsbD, PsbE, PsbF, PsbH, PsbI, PsbJ, PsbK, PsbL, PsbM, PsbT, PsbX, PsbY, PsbZ, Psb30/Ycf12, at least 3 peripheral proteins of the oxygen-evolving complex and a large number of cofactors. It forms dimeric complexes. Requires heme b as cofactor.

It localises to the plastid. It is found in the chloroplast thylakoid membrane. In terms of biological role, this b-type cytochrome is tightly associated with the reaction center of photosystem II (PSII). PSII is a light-driven water:plastoquinone oxidoreductase that uses light energy to abstract electrons from H(2)O, generating O(2) and a proton gradient subsequently used for ATP formation. It consists of a core antenna complex that captures photons, and an electron transfer chain that converts photonic excitation into a charge separation. This is Cytochrome b559 subunit alpha from Mesostigma viride (Green alga).